A 455-amino-acid chain; its full sequence is Exodeoxyribonuclease 7 large subunit (455 aa).

It belongs to the XseA family. As to quaternary structure, heterooligomer composed of large and small subunits.

Its subcellular location is the cytoplasm. The enzyme catalyses Exonucleolytic cleavage in either 5'- to 3'- or 3'- to 5'-direction to yield nucleoside 5'-phosphates.. In terms of biological role, bidirectionally degrades single-stranded DNA into large acid-insoluble oligonucleotides, which are then degraded further into small acid-soluble oligonucleotides. The chain is Exodeoxyribonuclease 7 large subunit from Lactobacillus acidophilus (strain ATCC 700396 / NCK56 / N2 / NCFM).